A 111-amino-acid chain; its full sequence is Ribonuclease P protein component (111 aa).

It belongs to the RnpA family. In terms of assembly, consists of a catalytic RNA component (M1 or rnpB) and a protein subunit.

It catalyses the reaction Endonucleolytic cleavage of RNA, removing 5'-extranucleotides from tRNA precursor.. Functionally, RNaseP catalyzes the removal of the 5'-leader sequence from pre-tRNA to produce the mature 5'-terminus. It can also cleave other RNA substrates such as 4.5S RNA. The protein component plays an auxiliary but essential role in vivo by binding to the 5'-leader sequence and broadening the substrate specificity of the ribozyme. The chain is Ribonuclease P protein component from Streptococcus thermophilus (strain ATCC BAA-491 / LMD-9).